The chain runs to 78 residues: Putative membrane protein insertion efficiency factor (78 aa).

It belongs to the UPF0161 family.

The protein localises to the cell membrane. In terms of biological role, could be involved in insertion of integral membrane proteins into the membrane. The chain is Putative membrane protein insertion efficiency factor from Bacillus mycoides (strain KBAB4) (Bacillus weihenstephanensis).